The following is a 597-amino-acid chain: Probable HECT-type ubiquitin ligase-interacting protein creD (597 aa).

Disordered stretches follow at residues 375–398 and 432–499; these read ELDP…GTLS and LNIT…MATP. The span at 443 to 455 shows a compositional bias: basic and acidic residues; it reads TDHESQNDSEHRR. Positions 465–481 are enriched in low complexity; that stretch reads PSSGSNSHSPSSPVLSR. Over residues 482–492 the composition is skewed to basic and acidic residues; the sequence is RPSDEVDHEHV.

This sequence belongs to the arrestin family. As to quaternary structure, interacts with hulA.

Component of the regulatory network controlling carbon source utilization through ubiquitination and deubiquitination involving creA, creB, creC, creD and acrB. May be involved in signaling by recognizing appropriately phosphorylated substrates via its arrestin domains and then recruit a HECT-type ubiquitin ligase such as hulA, leading to ubiquitination of the substrate, providing a link between ubiquitination and phosphorylation in protein regulation and stability. In Aspergillus oryzae (strain ATCC 42149 / RIB 40) (Yellow koji mold), this protein is Probable HECT-type ubiquitin ligase-interacting protein creD (creD).